The chain runs to 1320 residues: Centrosomin (1320 aa).

Residues Ala20–Ser41 are disordered. A coiled-coil region spans residues Arg97–Leu516. Basic and acidic residues predominate over residues Asn517–Cys530. Residues Asn517–Met554 are disordered. A compositionally biased stretch (polar residues) spans Ile535 to Met554. Position 545 is a phosphoserine (Ser545). Coiled coils occupy residues Glu626 to Val654 and Asn712 to Ala983. The short motif at Arg644–Phe656 is the Nuclear localization signal element. Thr782 is modified (phosphothreonine). Residue Ser785 is modified to Phosphoserine. Basic and acidic residues predominate over residues Lys810–Arg823. 2 disordered regions span residues Lys810–Asp849 and Ser863–Ser893. Over residues Leu831–Glu843 the composition is skewed to polar residues. Phosphoserine occurs at positions 874, 876, 878, 1191, 1234, 1237, and 1239. A disordered region spans residues Val1220–Gly1249. A compositionally biased stretch (polar residues) spans Ser1237–Ala1247.

As to quaternary structure, monomer. In terms of tissue distribution, developing visceral mesoderm of the midgut, the central and peripheral nervous system, and developing gonads. Isoform J: Expressed in ovaries, testis and embryos. Isoform A: Expressed in testis only.

It is found in the cytoplasm. It localises to the cytoskeleton. The protein resides in the microtubule organizing center. The protein localises to the centrosome. Its subcellular location is the flagellum basal body. It is found in the perinuclear region. In terms of biological role, core component of the centrosome throughout spermatogenesis. May participate in mitotic spindle assembly and the mechanics of morphogenesis through an interaction with microtubules, either directly or indirectly. Is a target of several homeotic genes. This chain is Centrosomin (cnn), found in Drosophila melanogaster (Fruit fly).